Reading from the N-terminus, the 32-residue chain is Cytochrome b6-f complex subunit 7 (32 aa).

Residues 9–27 (AAVFWVLIPVGLAGGALLL) traverse the membrane as a helical segment.

This sequence belongs to the PetM family. As to quaternary structure, the 4 large subunits of the cytochrome b6-f complex are cytochrome b6, subunit IV (17 kDa polypeptide, PetD), cytochrome f and the Rieske protein, while the 4 small subunits are PetG, PetL, PetM and PetN. The complex functions as a dimer.

Its subcellular location is the cellular thylakoid membrane. Its function is as follows. Component of the cytochrome b6-f complex, which mediates electron transfer between photosystem II (PSII) and photosystem I (PSI), cyclic electron flow around PSI, and state transitions. The sequence is that of Cytochrome b6-f complex subunit 7 from Prochlorococcus marinus (strain MIT 9303).